A 428-amino-acid chain; its full sequence is Phosphomethylpyrimidine synthase 1 (428 aa).

Substrate-binding positions include N65, M94, Y123, H158, 180 to 182 (SRG), 221 to 224 (DGMR), and E260. H264 provides a ligand contact to Zn(2+). Y287 contributes to the substrate binding site. Zn(2+) is bound at residue H328. 3 residues coordinate [4Fe-4S] cluster: C405, C408, and C412.

The protein belongs to the ThiC family. [4Fe-4S] cluster serves as cofactor.

The catalysed reaction is 5-amino-1-(5-phospho-beta-D-ribosyl)imidazole + S-adenosyl-L-methionine = 4-amino-2-methyl-5-(phosphooxymethyl)pyrimidine + CO + 5'-deoxyadenosine + formate + L-methionine + 3 H(+). Its pathway is cofactor biosynthesis; thiamine diphosphate biosynthesis. In terms of biological role, catalyzes the synthesis of the hydroxymethylpyrimidine phosphate (HMP-P) moiety of thiamine from aminoimidazole ribotide (AIR) in a radical S-adenosyl-L-methionine (SAM)-dependent reaction. This Methanosarcina mazei (strain ATCC BAA-159 / DSM 3647 / Goe1 / Go1 / JCM 11833 / OCM 88) (Methanosarcina frisia) protein is Phosphomethylpyrimidine synthase 1.